The primary structure comprises 753 residues: Polyribonucleotide nucleotidyltransferase (753 aa).

Positions 488 and 494 each coordinate Mg(2+). The KH domain maps to 555–614 (PRLLRTKISPDKIGALIGPGGKNIRGIQETTGAVIEVDDEGTVLVASSNKESAQEAMRQV). Residues 624–692 (GKIYDGTVSS…EHDRVKLSRR (69 aa)) form the S1 motif domain. A compositionally biased stretch (acidic residues) spans 698–719 (LGEEDPLAVEGEGGGDSEGGGD). Residues 698-753 (LGEEDPLAVEGEGGGDSEGGGDGEDRPRRRRGGSGGGGGGGRGRGPRRSGGGRDRD) are disordered. The span at 730 to 740 (GSGGGGGGGRG) shows a compositional bias: gly residues.

The protein belongs to the polyribonucleotide nucleotidyltransferase family. It depends on Mg(2+) as a cofactor.

The protein resides in the cytoplasm. The enzyme catalyses RNA(n+1) + phosphate = RNA(n) + a ribonucleoside 5'-diphosphate. Involved in mRNA degradation. Catalyzes the phosphorolysis of single-stranded polyribonucleotides processively in the 3'- to 5'-direction. This is Polyribonucleotide nucleotidyltransferase from Rhodopirellula baltica (strain DSM 10527 / NCIMB 13988 / SH1).